The sequence spans 266 residues: Glucosamine-6-phosphate deaminase (266 aa).

The active-site Proton acceptor; for enolization step is Asp-72. The active-site For ring-opening step is Asp-141. His-143 functions as the Proton acceptor; for ring-opening step in the catalytic mechanism. Glu-148 functions as the For ring-opening step in the catalytic mechanism.

It belongs to the glucosamine/galactosamine-6-phosphate isomerase family. NagB subfamily. In terms of assembly, homohexamer.

The catalysed reaction is alpha-D-glucosamine 6-phosphate + H2O = beta-D-fructose 6-phosphate + NH4(+). It functions in the pathway amino-sugar metabolism; N-acetylneuraminate degradation; D-fructose 6-phosphate from N-acetylneuraminate: step 5/5. Its activity is regulated as follows. Allosterically activated by N-acetylglucosamine 6-phosphate (GlcNAc6P). Functionally, catalyzes the reversible isomerization-deamination of glucosamine 6-phosphate (GlcN6P) to form fructose 6-phosphate (Fru6P) and ammonium ion. The protein is Glucosamine-6-phosphate deaminase of Cronobacter sakazakii (strain ATCC BAA-894) (Enterobacter sakazakii).